The following is a 27-amino-acid chain: Paragonial peptide PS-1 (27 aa).

Positions 1 to 17 are enriched in low complexity; it reads DVPSANANANNQRTAAA. A disordered region spans residues 1-27; it reads DVPSANANANNQRTAAAKPQANAEASS.

As to expression, main cells of the accessory glands of males (paragonial gland).

It is found in the secreted. Functionally, represses female sexual receptivity and stimulates oviposition. This peptide has a low activity. The sequence is that of Paragonial peptide PS-1 (PapC) from Drosophila funebris (Fruit fly).